A 480-amino-acid chain; its full sequence is Aspartyl/glutamyl-tRNA(Asn/Gln) amidotransferase subunit B (480 aa).

Belongs to the GatB/GatE family. GatB subfamily. In terms of assembly, heterotrimer of A, B and C subunits.

It carries out the reaction L-glutamyl-tRNA(Gln) + L-glutamine + ATP + H2O = L-glutaminyl-tRNA(Gln) + L-glutamate + ADP + phosphate + H(+). The enzyme catalyses L-aspartyl-tRNA(Asn) + L-glutamine + ATP + H2O = L-asparaginyl-tRNA(Asn) + L-glutamate + ADP + phosphate + 2 H(+). In terms of biological role, allows the formation of correctly charged Asn-tRNA(Asn) or Gln-tRNA(Gln) through the transamidation of misacylated Asp-tRNA(Asn) or Glu-tRNA(Gln) in organisms which lack either or both of asparaginyl-tRNA or glutaminyl-tRNA synthetases. The reaction takes place in the presence of glutamine and ATP through an activated phospho-Asp-tRNA(Asn) or phospho-Glu-tRNA(Gln). This chain is Aspartyl/glutamyl-tRNA(Asn/Gln) amidotransferase subunit B, found in Streptococcus pneumoniae (strain ATCC 700669 / Spain 23F-1).